The sequence spans 456 residues: Bifunctional protein GlmU (456 aa).

Positions 1–229 (MSNSAMSVVI…LSEVEGVNNR (229 aa)) are pyrophosphorylase. UDP-N-acetyl-alpha-D-glucosamine contacts are provided by residues 11 to 14 (LAAG), K25, Q76, 81 to 82 (GT), 103 to 105 (YGD), G140, E154, N169, and N227. Residue D105 coordinates Mg(2+). N227 serves as a coordination point for Mg(2+). Residues 230–250 (LQLSRLERIYQAEQSEKLLLA) are linker. Positions 251 to 456 (GVMLLDPARF…QGWQRPVKKK (206 aa)) are N-acetyltransferase. The UDP-N-acetyl-alpha-D-glucosamine site is built by R333 and K351. H363 functions as the Proton acceptor in the catalytic mechanism. Residues Y366 and N377 each contribute to the UDP-N-acetyl-alpha-D-glucosamine site. Residues A380, 386-387 (NY), S405, A423, and R440 contribute to the acetyl-CoA site.

The protein in the N-terminal section; belongs to the N-acetylglucosamine-1-phosphate uridyltransferase family. It in the C-terminal section; belongs to the transferase hexapeptide repeat family. In terms of assembly, homotrimer. Mg(2+) serves as cofactor.

It is found in the cytoplasm. The catalysed reaction is alpha-D-glucosamine 1-phosphate + acetyl-CoA = N-acetyl-alpha-D-glucosamine 1-phosphate + CoA + H(+). It catalyses the reaction N-acetyl-alpha-D-glucosamine 1-phosphate + UTP + H(+) = UDP-N-acetyl-alpha-D-glucosamine + diphosphate. It functions in the pathway nucleotide-sugar biosynthesis; UDP-N-acetyl-alpha-D-glucosamine biosynthesis; N-acetyl-alpha-D-glucosamine 1-phosphate from alpha-D-glucosamine 6-phosphate (route II): step 2/2. Its pathway is nucleotide-sugar biosynthesis; UDP-N-acetyl-alpha-D-glucosamine biosynthesis; UDP-N-acetyl-alpha-D-glucosamine from N-acetyl-alpha-D-glucosamine 1-phosphate: step 1/1. It participates in bacterial outer membrane biogenesis; LPS lipid A biosynthesis. In terms of biological role, catalyzes the last two sequential reactions in the de novo biosynthetic pathway for UDP-N-acetylglucosamine (UDP-GlcNAc). The C-terminal domain catalyzes the transfer of acetyl group from acetyl coenzyme A to glucosamine-1-phosphate (GlcN-1-P) to produce N-acetylglucosamine-1-phosphate (GlcNAc-1-P), which is converted into UDP-GlcNAc by the transfer of uridine 5-monophosphate (from uridine 5-triphosphate), a reaction catalyzed by the N-terminal domain. The chain is Bifunctional protein GlmU from Serratia proteamaculans (strain 568).